Consider the following 270-residue polypeptide: ParA family protein MPN_688 (270 aa).

It belongs to the ParA family.

The protein is ParA family protein MPN_688 of Mycoplasma pneumoniae (strain ATCC 29342 / M129 / Subtype 1) (Mycoplasmoides pneumoniae).